The following is a 211-amino-acid chain: NADH-quinone oxidoreductase subunit I (211 aa).

The disordered stretch occupies residues 21-41 (PTTEQYPEQKKETAPRFHGRH). 4Fe-4S ferredoxin-type domains lie at 43 to 73 (LNRH…VEGA) and 89 to 118 (RVYQ…MSND). [4Fe-4S] cluster is bound by residues cysteine 53, cysteine 56, cysteine 59, cysteine 63, cysteine 98, cysteine 101, cysteine 104, and cysteine 108. The interval 141-211 (RAGMESPPHP…AHGAGSERPR (71 aa)) is disordered. The segment covering 152–166 (RLGESETDYYTRDPD) has biased composition (basic and acidic residues). A compositionally biased stretch (acidic residues) spans 179-191 (DEADEAGEAGEAG). Over residues 192–211 (EAERAADKVPAHGAGSERPR) the composition is skewed to basic and acidic residues.

It belongs to the complex I 23 kDa subunit family. NDH-1 is composed of 14 different subunits. Subunits NuoA, H, J, K, L, M, N constitute the membrane sector of the complex. [4Fe-4S] cluster serves as cofactor.

It localises to the cell membrane. It catalyses the reaction a quinone + NADH + 5 H(+)(in) = a quinol + NAD(+) + 4 H(+)(out). Its function is as follows. NDH-1 shuttles electrons from NADH, via FMN and iron-sulfur (Fe-S) centers, to quinones in the respiratory chain. The immediate electron acceptor for the enzyme in this species is believed to be ubiquinone. Couples the redox reaction to proton translocation (for every two electrons transferred, four hydrogen ions are translocated across the cytoplasmic membrane), and thus conserves the redox energy in a proton gradient. In Parafrankia sp. (strain EAN1pec), this protein is NADH-quinone oxidoreductase subunit I.